An 865-amino-acid chain; its full sequence is High affinity cAMP-specific and IBMX-insensitive 3',5'-cyclic phosphodiesterase 8B (865 aa).

Disordered stretches follow at residues Cys17 to Leu40 and Ala52 to Gly92. Over residues Ser23 to Pro36 the composition is skewed to polar residues. The span at Gly75–Cys90 shows a compositional bias: low complexity. One can recognise a PAS domain in the interval Ala247 to Gly318. The tract at residues Ile373–Asn415 is disordered. Positions Ser402 to Asn415 are enriched in polar residues. The residue at position 497 (Ser497) is a Phosphoserine. One can recognise a PDEase domain in the interval Thr519–Lys855. The active-site Proton donor is His595. The a divalent metal cation site is built by His599, His635, and Asp636. Phosphoserine occurs at positions 731 and 734. Position 761 (Asp761) interacts with a divalent metal cation.

It belongs to the cyclic nucleotide phosphodiesterase family. PDE8 subfamily. It depends on a divalent metal cation as a cofactor. In terms of tissue distribution, widely expressed.

The catalysed reaction is 3',5'-cyclic AMP + H2O = AMP + H(+). The protein operates within purine metabolism; 3',5'-cyclic AMP degradation; AMP from 3',5'-cyclic AMP: step 1/1. In terms of biological role, hydrolyzes the second messenger cAMP, which is a key regulator of many important physiological processes. May be involved in specific signaling in the thyroid gland. In Mus musculus (Mouse), this protein is High affinity cAMP-specific and IBMX-insensitive 3',5'-cyclic phosphodiesterase 8B (Pde8b).